A 336-amino-acid chain; its full sequence is Foldase protein PrsA (336 aa).

Positions 1–22 (MKSAKKLLSVLCLGIFILTFTA) are cleaved as a signal peptide. C23 carries N-palmitoyl cysteine lipidation. Residue C23 is the site of S-diacylglycerol cysteine attachment. The region spanning 194–286 (PNTMNVSHIL…WGYHIIKINS (93 aa)) is the PpiC domain.

Belongs to the PrsA family.

It is found in the cell membrane. The enzyme catalyses [protein]-peptidylproline (omega=180) = [protein]-peptidylproline (omega=0). Plays a major role in protein secretion by helping the post-translocational extracellular folding of several secreted proteins. This is Foldase protein PrsA from Clostridium botulinum (strain Langeland / NCTC 10281 / Type F).